We begin with the raw amino-acid sequence, 83 residues long: MPLKETTGKVVSDKMNKTIVVAVENRISHRKYAKTMIRTKKYKAHDENNECTIGDIVTIQETRPLSRTKCWTMVNILSKSFDN.

Belongs to the universal ribosomal protein uS17 family. In terms of assembly, part of the 30S ribosomal subunit.

Its subcellular location is the plastid. The protein localises to the chloroplast. In terms of biological role, one of the primary rRNA binding proteins, it binds specifically to the 5'-end of 16S ribosomal RNA. The sequence is that of Small ribosomal subunit protein uS17c (rps17) from Pyropia yezoensis (Susabi-nori).